We begin with the raw amino-acid sequence, 158 residues long: Regulator of sigma D (158 aa).

It belongs to the Rsd/AlgQ family. In terms of assembly, interacts with RpoD.

It localises to the cytoplasm. In terms of biological role, binds RpoD and negatively regulates RpoD-mediated transcription activation by preventing the interaction between the primary sigma factor RpoD with the catalytic core of the RNA polymerase and with promoter DNA. May be involved in replacement of the RNA polymerase sigma subunit from RpoD to RpoS during the transition from exponential growth to the stationary phase. The protein is Regulator of sigma D of Escherichia coli (strain SMS-3-5 / SECEC).